Consider the following 509-residue polypeptide: Coiled-coil domain-containing protein 181 (509 aa).

Basic and acidic residues predominate over residues 58–82 (VIEHTKQHSDPDKSLQDEVSPRKND). 3 disordered regions span residues 58 to 120 (VIEH…EEED), 241 to 332 (PINN…VTST), and 345 to 367 (QLEQ…EEKE). 2 stretches are compositionally biased toward polar residues: residues 243-266 (NNAN…SVSG) and 300-332 (TCPS…VTST). Positions 335–375 (LSPRQKELQKQLEQKREKLKREEERRKIEEEKEKKRENDIV) form a coiled coil.

It belongs to the CCDC181 family. As to quaternary structure, homodimer. Interacts with HOOK1. Interacts with HOOK2. Interacts with HOOK3.

It is found in the cytoplasm. The protein resides in the cytoskeleton. The protein localises to the cell projection. It localises to the cilium. Its subcellular location is the flagellum. In terms of biological role, microtubule-binding protein that localizes to the microtubular manchette of elongating spermatids. The sequence is that of Coiled-coil domain-containing protein 181 from Pongo abelii (Sumatran orangutan).